The primary structure comprises 511 residues: Ribonuclease Y (511 aa).

The helical transmembrane segment at 3–23 threads the bilayer; that stretch reads VTIVASIACFIVGGILSYVLF. The KH domain maps to 201–261; that stretch reads SVTVFHIESD…VRREIARLAL (61 aa). The HD domain occupies 327-420; sequence LLQHARETAN…VQVCDAISGA (94 aa).

The protein belongs to the RNase Y family.

The protein localises to the cell membrane. Endoribonuclease that initiates mRNA decay. This chain is Ribonuclease Y, found in Bacteroides fragilis (strain ATCC 25285 / DSM 2151 / CCUG 4856 / JCM 11019 / LMG 10263 / NCTC 9343 / Onslow / VPI 2553 / EN-2).